The primary structure comprises 212 residues: uncharacterized protein (212 aa).

A run of 4 helical transmembrane segments spans residues 20–40 (FLIG…LIIC), 70–90 (LMLL…YWLG), 155–175 (FVLI…YLGE), and 192–212 (QIVI…MEKI).

Belongs to the DedA family.

It localises to the cell membrane. This is an uncharacterized protein from Haemophilus influenzae (strain ATCC 51907 / DSM 11121 / KW20 / Rd).